An 829-amino-acid chain; its full sequence is RNA-directed RNA polymerase (829 aa).

The tract at residues 1 to 39 is disordered; the sequence is MKEPVDCRLSTPAGFSGTVPPPGRTKAARPGTIPVRRSR.

Forms a ribonucleoprotein complex with the 20S RNA, where a single polymerase molecule binds to a single viral RNA genome. Since the viral RNA is not encapsidated, ribonucleoprotein complex formation appears to be the strategy to survive in the host as persistent virus.

Its subcellular location is the host cytoplasm. It carries out the reaction RNA(n) + a ribonucleoside 5'-triphosphate = RNA(n+1) + diphosphate. RNA-directed RNA polymerase that replicates the viral (+) and (-) genome. The protein is RNA-directed RNA polymerase of Saccharomyces cerevisiae (Baker's yeast).